Here is a 382-residue protein sequence, read N- to C-terminus: Lipid-A-disaccharide synthase (382 aa).

It belongs to the LpxB family.

The enzyme catalyses 2-N,3-O-bis[(3R)-3-hydroxytetradecanoyl]-alpha-D-glucosaminyl 1-phosphate + UDP-2-N,3-O-bis[(3R)-3-hydroxytetradecanoyl]-alpha-D-glucosamine = lipid A disaccharide (E. coli) + UDP + H(+). The catalysed reaction is a lipid X + a UDP-2-N,3-O-bis[(3R)-3-hydroxyacyl]-alpha-D-glucosamine = a lipid A disaccharide + UDP + H(+). It functions in the pathway glycolipid biosynthesis; lipid IV(A) biosynthesis; lipid IV(A) from (3R)-3-hydroxytetradecanoyl-[acyl-carrier-protein] and UDP-N-acetyl-alpha-D-glucosamine: step 5/6. Functionally, condensation of UDP-2,3-diacylglucosamine and 2,3-diacylglucosamine-1-phosphate to form lipid A disaccharide, a precursor of lipid A, a phosphorylated glycolipid that anchors the lipopolysaccharide to the outer membrane of the cell. This Salmonella agona (strain SL483) protein is Lipid-A-disaccharide synthase.